Reading from the N-terminus, the 60-residue chain is Anionic antimicrobial peptide 2 (60 aa).

Hemolymph.

The protein resides in the secreted. Antimicrobial protein. Has antibacterial activity against the Gram-positive bacteria M.luteus (MIC=86.6 uM), L.monocytogenes (MIC=86.6 uM), and S.lutea (MIC=86.6 uM). Lacks antibacterial activity against the Gram-positive bacteria B.circulans and S.aureus, and the Gram-negative bacteria E.coli D31, E.coli ATCC 25922, and S.typhimurium. Has antifungal activity against P.pastoris (MIC=86.6 uM) and P.stipitis (MIC=90.9 uM), but lacks antifungal activity against A.niger, C.albicans, C.albidus, C.fructus, C.wickerhamii, F.oxysporum, S.cerevisiae, S.pombe, T.harzianum, and Z.marxianus. The sequence is that of Anionic antimicrobial peptide 2 from Galleria mellonella (Greater wax moth).